A 215-amino-acid chain; its full sequence is Cytochrome b6 (215 aa).

Residues 32 to 52 traverse the membrane as a helical segment; the sequence is IFYCLGGITLTCFLVQVATGF. Residue cysteine 35 coordinates heme c. The heme b site is built by histidine 86 and histidine 100. A run of 3 helical transmembrane segments spans residues 90-110, 116-136, and 186-206; these read ASMM…TGGF, LTWV…VTGY, and LHTF…FPMI. Heme b contacts are provided by histidine 187 and histidine 202.

It belongs to the cytochrome b family. PetB subfamily. The 4 large subunits of the cytochrome b6-f complex are cytochrome b6, subunit IV (17 kDa polypeptide, PetD), cytochrome f and the Rieske protein, while the 4 small subunits are PetG, PetL, PetM and PetN. The complex functions as a dimer. Heme b serves as cofactor. Requires heme c as cofactor.

It localises to the plastid. It is found in the chloroplast thylakoid membrane. Component of the cytochrome b6-f complex, which mediates electron transfer between photosystem II (PSII) and photosystem I (PSI), cyclic electron flow around PSI, and state transitions. The protein is Cytochrome b6 of Agrostis stolonifera (Creeping bentgrass).